The sequence spans 130 residues: Small ribosomal subunit protein uS8 (130 aa).

The protein belongs to the universal ribosomal protein uS8 family. Part of the 30S ribosomal subunit.

Functionally, one of the primary rRNA binding proteins, it binds directly to 16S rRNA central domain where it helps coordinate assembly of the platform of the 30S subunit. The chain is Small ribosomal subunit protein uS8 from Methanococcus aeolicus (strain ATCC BAA-1280 / DSM 17508 / OCM 812 / Nankai-3).